We begin with the raw amino-acid sequence, 387 residues long: Carbamoyl phosphate synthase small chain (387 aa).

Residues 1-196 (MEGVLSQLAV…FSINKQKFLF (196 aa)) are CPSase. Residues S51, G245, and G247 each coordinate L-glutamine. Residues 197–384 (HVVVYDFGVK…IKLIVSQKTT (188 aa)) form the Glutamine amidotransferase type-1 domain. C273 functions as the Nucleophile in the catalytic mechanism. The L-glutamine site is built by L274, Q277, N315, and F318. Active-site residues include H357 and E359.

Belongs to the CarA family. As to quaternary structure, composed of two chains; the small (or glutamine) chain promotes the hydrolysis of glutamine to ammonia, which is used by the large (or ammonia) chain to synthesize carbamoyl phosphate. Tetramer of heterodimers (alpha,beta)4.

It catalyses the reaction hydrogencarbonate + L-glutamine + 2 ATP + H2O = carbamoyl phosphate + L-glutamate + 2 ADP + phosphate + 2 H(+). The catalysed reaction is L-glutamine + H2O = L-glutamate + NH4(+). Its pathway is amino-acid biosynthesis; L-arginine biosynthesis; carbamoyl phosphate from bicarbonate: step 1/1. It functions in the pathway pyrimidine metabolism; UMP biosynthesis via de novo pathway; (S)-dihydroorotate from bicarbonate: step 1/3. Its function is as follows. Small subunit of the glutamine-dependent carbamoyl phosphate synthetase (CPSase). CPSase catalyzes the formation of carbamoyl phosphate from the ammonia moiety of glutamine, carbonate, and phosphate donated by ATP, constituting the first step of 2 biosynthetic pathways, one leading to arginine and/or urea and the other to pyrimidine nucleotides. The small subunit (glutamine amidotransferase) binds and cleaves glutamine to supply the large subunit with the substrate ammonia. The polypeptide is Carbamoyl phosphate synthase small chain (Buchnera aphidicola subsp. Acyrthosiphon pisum (strain APS) (Acyrthosiphon pisum symbiotic bacterium)).